The following is a 400-amino-acid chain: Beta-ketoadipyl-CoA thiolase (400 aa).

Catalysis depends on Cys90, which acts as the Acyl-thioester intermediate. Catalysis depends on proton acceptor residues His356 and Cys386.

This sequence belongs to the thiolase-like superfamily. Thiolase family.

The enzyme catalyses succinyl-CoA + acetyl-CoA = 3-oxoadipyl-CoA + CoA. It participates in aromatic compound metabolism; beta-ketoadipate pathway; acetyl-CoA and succinyl-CoA from 3-oxoadipate: step 2/2. Its function is as follows. Catalyzes thiolytic cleavage of beta-ketoadipyl-CoA to succinyl-CoA and acetyl-CoA. The protein is Beta-ketoadipyl-CoA thiolase (pcaF) of Pseudomonas putida (Arthrobacter siderocapsulatus).